A 246-amino-acid chain; its full sequence is Processing and transport protein (246 aa).

Belongs to the herpesviridae PRTP family.

This protein may affect translocation of the virus glycoproteins to membranes. It is involved in capsid maturation. In Homo sapiens (Human), this protein is Processing and transport protein (UL28).